The chain runs to 462 residues: Phosphoglucosamine mutase (462 aa).

Serine 111 acts as the Phosphoserine intermediate in catalysis. Mg(2+) contacts are provided by serine 111, aspartate 250, aspartate 252, and aspartate 254. Serine 111 carries the phosphoserine modification.

This sequence belongs to the phosphohexose mutase family. Mg(2+) is required as a cofactor. Post-translationally, activated by phosphorylation.

The catalysed reaction is alpha-D-glucosamine 1-phosphate = D-glucosamine 6-phosphate. Functionally, catalyzes the conversion of glucosamine-6-phosphate to glucosamine-1-phosphate. The chain is Phosphoglucosamine mutase from Synechococcus sp. (strain WH7803).